A 209-amino-acid polypeptide reads, in one-letter code: Large ribosomal subunit protein bL25 (209 aa).

The segment at 188–209 is disordered; it reads STSMEKEGEGSQEPTAAPSSEN. Residues 199-209 are compositionally biased toward polar residues; the sequence is QEPTAAPSSEN.

This sequence belongs to the bacterial ribosomal protein bL25 family. CTC subfamily. Part of the 50S ribosomal subunit; part of the 5S rRNA/L5/L18/L25 subcomplex. Contacts the 5S rRNA. Binds to the 5S rRNA independently of L5 and L18.

This is one of the proteins that binds to the 5S RNA in the ribosome where it forms part of the central protuberance. In Ehrlichia canis (strain Jake), this protein is Large ribosomal subunit protein bL25.